The sequence spans 933 residues: Phosphoenolpyruvate carboxylase (933 aa).

Residues histidine 158 and lysine 592 contribute to the active site.

It belongs to the PEPCase type 1 family. Mg(2+) serves as cofactor.

The catalysed reaction is oxaloacetate + phosphate = phosphoenolpyruvate + hydrogencarbonate. Its function is as follows. Forms oxaloacetate, a four-carbon dicarboxylic acid source for the tricarboxylic acid cycle. In Nitrosomonas europaea (strain ATCC 19718 / CIP 103999 / KCTC 2705 / NBRC 14298), this protein is Phosphoenolpyruvate carboxylase.